The chain runs to 355 residues: Proto-oncogene Wnt-3 (355 aa).

Residues 1 to 21 form the signal peptide; the sequence is MEPHLLGLLLGLLLGGTRVLA. Disulfide bonds link Cys80/Cys91, Cys131/Cys139, Cys141/Cys158, Cys206/Cys220, Cys208/Cys215, Cys284/Cys315, Cys300/Cys310, Cys314/Cys354, Cys330/Cys345, Cys332/Cys342, and Cys337/Cys338. N-linked (GlcNAc...) asparagine glycosylation occurs at Asn90. The O-palmitoleoyl serine; by PORCN moiety is linked to residue Ser212. The N-linked (GlcNAc...) asparagine glycan is linked to Asn301.

Belongs to the Wnt family. In terms of assembly, forms a soluble 1:1 complex with AFM; this prevents oligomerization and is required for prolonged biological activity. The complex with AFM may represent the physiological form in body fluids. Interacts with PORCN. Interacts with WLS. Palmitoleoylation is required for efficient binding to frizzled receptors. Depalmitoleoylation leads to Wnt signaling pathway inhibition.

Its subcellular location is the secreted. The protein localises to the extracellular space. It is found in the extracellular matrix. Functionally, ligand for members of the frizzled family of seven transmembrane receptors. Functions in the canonical Wnt signaling pathway that results in activation of transcription factors of the TCF/LEF family. Required for normal gastrulation, formation of the primitive streak, and for the formation of the mesoderm during early embryogenesis. Required for normal formation of the apical ectodermal ridge. Required for normal embryonic development, and especially for limb development. This Homo sapiens (Human) protein is Proto-oncogene Wnt-3 (WNT3).